A 78-amino-acid polypeptide reads, in one-letter code: Conotoxin ArMKLT2-0312 (78 aa).

Positions 1 to 22 (MKLTCVLIIAVLFLTACQLITA) are cleaved as a signal peptide. Positions 23 to 45 (DYSRDKQEYRAVRLRDAMRYSRV) are excised as a propeptide. Position 48 is a pyrrolidone carboxylic acid (glutamine 48). Disulfide bonds link cysteine 49/cysteine 62, cysteine 56/cysteine 67, and cysteine 61/cysteine 75.

It belongs to the conotoxin O1 superfamily. In terms of tissue distribution, expressed by the venom duct.

The protein localises to the secreted. The chain is Conotoxin ArMKLT2-0312 from Conus arenatus (Sand-dusted cone).